A 585-amino-acid polypeptide reads, in one-letter code: Glycerol-3-phosphate acyltransferase 1 (585 aa).

The next 3 membrane-spanning stretches (helical) occupy residues 126 to 146 (FFPY…AILL), 334 to 354 (TPLA…LAVF), and 356 to 376 (ISVG…MSGV). An HXXXXD motif motif is present at residues 403 to 408 (HRTLLD).

Belongs to the GPAT/DAPAT family. As to expression, highly expressed in developing siliques and flower buds. Weakly or not expressed in roots, seedlings and leaves.

The protein localises to the membrane. It localises to the mitochondrion. It carries out the reaction sn-glycerol 3-phosphate + an acyl-CoA = a 1-acyl-sn-glycero-3-phosphate + CoA. Its pathway is phospholipid metabolism; CDP-diacylglycerol biosynthesis; CDP-diacylglycerol from sn-glycerol 3-phosphate: step 1/3. Esterifies acyl-group from acyl-ACP to the sn-1 position of glycerol-3-phosphate, an essential step in glycerolipid biosynthesis. Involved in pollen development, by being required for tapetum differentiation and male fertility. In addition to the sporophytic effect, it also exerts a gametophytic effect on pollen performance. The polypeptide is Glycerol-3-phosphate acyltransferase 1 (GPAT1) (Arabidopsis thaliana (Mouse-ear cress)).